The chain runs to 109 residues: Small ribosomal subunit protein bS6c (109 aa).

Belongs to the bacterial ribosomal protein bS6 family.

The protein resides in the plastid. Its subcellular location is the chloroplast. In terms of biological role, binds together with bS18 to 16S ribosomal RNA. The polypeptide is Small ribosomal subunit protein bS6c (Pyropia yezoensis (Susabi-nori)).